The sequence spans 385 residues: Putative mitochondrial carrier protein TRV_02148.2 (385 aa).

Solcar repeat units follow at residues 24-124 (SNTL…LHAR) and 130-210 (RTAG…LRRR). A run of 5 helical transmembrane segments spans residues 30-47 (GTAI…DSIL), 132-150 (AGNE…KLFT), 184-207 (WSAY…YLAL), 263-279 (YTIC…LEVI), and 294-310 (VVTV…LYML).

The protein belongs to the mitochondrial carrier (TC 2.A.29) family.

Its subcellular location is the mitochondrion inner membrane. Functionally, may function as a mitochondrial transporter. This chain is Putative mitochondrial carrier protein TRV_02148.2, found in Trichophyton verrucosum (strain HKI 0517).